A 415-amino-acid chain; its full sequence is DNA double-strand break repair protein Mre11 (415 aa).

Positions 10, 12, 51, and 86 each coordinate Mn(2+). His87 acts as the Proton donor in catalysis. The Mn(2+) site is built by His174, His208, and His210.

This sequence belongs to the MRE11/RAD32 family. As to quaternary structure, homodimer. Forms a heterotetramer composed of two Mre11 subunits and two Rad50 subunits. The cofactor is Mn(2+).

With respect to regulation, nuclease activity is regulated by Rad50. In terms of biological role, part of the Rad50/Mre11 complex, which is involved in the early steps of DNA double-strand break (DSB) repair. The complex may facilitate opening of the processed DNA ends to aid in the recruitment of HerA and NurA. Mre11 binds to DSB ends and has both double-stranded 3'-5' exonuclease activity and single-stranded endonuclease activity. The sequence is that of DNA double-strand break repair protein Mre11 from Pyrococcus abyssi (strain GE5 / Orsay).